The chain runs to 471 residues: UDP-N-acetylmuramate--L-alanine ligase (471 aa).

112-118 (GTHGKTT) is an ATP binding site.

The protein belongs to the MurCDEF family.

It localises to the cytoplasm. It carries out the reaction UDP-N-acetyl-alpha-D-muramate + L-alanine + ATP = UDP-N-acetyl-alpha-D-muramoyl-L-alanine + ADP + phosphate + H(+). The protein operates within cell wall biogenesis; peptidoglycan biosynthesis. Functionally, cell wall formation. The polypeptide is UDP-N-acetylmuramate--L-alanine ligase (Cupriavidus metallidurans (strain ATCC 43123 / DSM 2839 / NBRC 102507 / CH34) (Ralstonia metallidurans)).